Reading from the N-terminus, the 197-residue chain is Negative modulator of initiation of replication (197 aa).

Interaction with DNA stretches follow at residues 100-101, 129-133, and 163-169; these read AV, RTRVY, and NTNSGRK.

It belongs to the SeqA family. Homodimer. Polymerizes to form helical filaments.

The protein localises to the cytoplasm. In terms of biological role, negative regulator of replication initiation, which contributes to regulation of DNA replication and ensures that replication initiation occurs exactly once per chromosome per cell cycle. Binds to pairs of hemimethylated GATC sequences in the oriC region, thus preventing assembly of replication proteins and re-initiation at newly replicated origins. Repression is relieved when the region becomes fully methylated. In Haemophilus influenzae (strain ATCC 51907 / DSM 11121 / KW20 / Rd), this protein is Negative modulator of initiation of replication.